The chain runs to 448 residues: T-box transcription factor TBX19 (448 aa).

A DNA-binding region (T-box) is located at residues 45–218 (LEDAPLWQRF…YNPFAKAFLD (174 aa)).

It localises to the nucleus. Its function is as follows. Transcriptional regulator involved in developmental processes. Can activate POMC gene expression and repress the alpha glycoprotein subunit and thyroid-stimulating hormone beta promoters. The polypeptide is T-box transcription factor TBX19 (Homo sapiens (Human)).